Reading from the N-terminus, the 62-residue chain is Photosystem II reaction center protein Z (62 aa).

2 helical membrane passes run 8-28 (AVFALIATSSILLISVPVVFA) and 41-61 (FSGTSLWIGLVFLVGILNSLI).

The protein belongs to the PsbZ family. As to quaternary structure, PSII is composed of 1 copy each of membrane proteins PsbA, PsbB, PsbC, PsbD, PsbE, PsbF, PsbH, PsbI, PsbJ, PsbK, PsbL, PsbM, PsbT, PsbY, PsbZ, Psb30/Ycf12, at least 3 peripheral proteins of the oxygen-evolving complex and a large number of cofactors. It forms dimeric complexes.

The protein resides in the plastid. The protein localises to the chloroplast thylakoid membrane. May control the interaction of photosystem II (PSII) cores with the light-harvesting antenna, regulates electron flow through the 2 photosystem reaction centers. PSII is a light-driven water plastoquinone oxidoreductase, using light energy to abstract electrons from H(2)O, generating a proton gradient subsequently used for ATP formation. This is Photosystem II reaction center protein Z from Nymphaea alba (White water-lily).